Reading from the N-terminus, the 2149-residue chain is Oxygen-regulated protein 1 (2149 aa).

The segment covering 1–20 has biased composition (polar residues); it reads MSDTPSTGFSMIHPTSSEGQ. The disordered stretch occupies residues 1–25; that stretch reads MSDTPSTGFSMIHPTSSEGQVPSPR. Residues 36 to 118 enclose the Doublecortin 1 domain; sequence KRISFYKSGD…GRKVQPVDLD (83 aa). A disordered region spans residues 127-148; that stretch reads WLSSRAVSTHAPPHSVAAPGMP. One can recognise a Doublecortin 2 domain in the interval 152 to 231; that stretch reads RSLVVFRNGD…REPFKPGNYD (80 aa). Disordered stretches follow at residues 351–373, 1435–1456, and 1583–1613; these read VSKT…RTES, MEEP…SSER, and VTSD…SGEL. Residues 1446 to 1456 show a composition bias toward polar residues; it reads SVTNSVTSSER.

Interacts (via the doublecortin domains) with microtubules. Interacts with RP1L1. Interacts with MAK.

The protein localises to the cytoplasm. It localises to the cytoskeleton. The protein resides in the cilium axoneme. It is found in the cell projection. Its subcellular location is the cilium. The protein localises to the photoreceptor outer segment. In terms of biological role, microtubule-associated protein regulating the stability and length of the microtubule-based axoneme of photoreceptors. Required for the differentiation of photoreceptor cells, it plays a role in the organization of the outer segment of rod and cone photoreceptors ensuring the correct orientation and higher-order stacking of outer segment disks along the photoreceptor axoneme. This chain is Oxygen-regulated protein 1 (RP1), found in Saimiri boliviensis boliviensis (Bolivian squirrel monkey).